Reading from the N-terminus, the 361-residue chain is UDP-3-O-acylglucosamine N-acyltransferase (361 aa).

The active-site Proton acceptor is the His-253.

It belongs to the transferase hexapeptide repeat family. LpxD subfamily. As to quaternary structure, homotrimer.

It catalyses the reaction a UDP-3-O-[(3R)-3-hydroxyacyl]-alpha-D-glucosamine + a (3R)-hydroxyacyl-[ACP] = a UDP-2-N,3-O-bis[(3R)-3-hydroxyacyl]-alpha-D-glucosamine + holo-[ACP] + H(+). It participates in bacterial outer membrane biogenesis; LPS lipid A biosynthesis. Its function is as follows. Catalyzes the N-acylation of UDP-3-O-acylglucosamine using 3-hydroxyacyl-ACP as the acyl donor. Is involved in the biosynthesis of lipid A, a phosphorylated glycolipid that anchors the lipopolysaccharide to the outer membrane of the cell. This Burkholderia pseudomallei (strain 668) protein is UDP-3-O-acylglucosamine N-acyltransferase.